A 228-amino-acid chain; its full sequence is L-ribulose-5-phosphate 4-epimerase UlaF (228 aa).

Substrate is bound by residues 26-27, 43-44, and 72-73; these read GN, SG, and SS. Residues aspartate 74, histidine 93, and histidine 95 each coordinate Zn(2+). The Proton donor/acceptor role is filled by aspartate 118. Histidine 167 serves as a coordination point for Zn(2+). The Proton donor/acceptor role is filled by tyrosine 225.

This sequence belongs to the aldolase class II family. AraD/FucA subfamily. The cofactor is Zn(2+).

The enzyme catalyses L-ribulose 5-phosphate = D-xylulose 5-phosphate. Its pathway is cofactor degradation; L-ascorbate degradation; D-xylulose 5-phosphate from L-ascorbate: step 4/4. Catalyzes the isomerization of L-ribulose 5-phosphate to D-xylulose 5-phosphate. Is involved in the anaerobic L-ascorbate utilization. In Shigella sonnei (strain Ss046), this protein is L-ribulose-5-phosphate 4-epimerase UlaF.